A 235-amino-acid polypeptide reads, in one-letter code: Adenosine 5'-phosphosulfate reductase (235 aa).

Cysteine 121, cysteine 122, cysteine 204, and cysteine 207 together coordinate [4Fe-4S] cluster. Cysteine 230 acts as the Nucleophile; cysteine thiosulfonate intermediate in catalysis.

This sequence belongs to the PAPS reductase family. CysH subfamily. It depends on [4Fe-4S] cluster as a cofactor.

The protein resides in the cytoplasm. It catalyses the reaction [thioredoxin]-disulfide + sulfite + AMP + 2 H(+) = adenosine 5'-phosphosulfate + [thioredoxin]-dithiol. It functions in the pathway sulfur metabolism; hydrogen sulfide biosynthesis; sulfite from sulfate. Functionally, catalyzes the formation of sulfite from adenosine 5'-phosphosulfate (APS) using thioredoxin as an electron donor. This Anoxybacillus flavithermus (strain DSM 21510 / WK1) protein is Adenosine 5'-phosphosulfate reductase.